The sequence spans 397 residues: Homocitrate synthase AksA (397 aa).

A Pyruvate carboxyltransferase domain is found at 19-270; that stretch reads VIVYDTTLRD…DPGFNTEVLA (252 aa).

This sequence belongs to the alpha-IPM synthase/homocitrate synthase family.

It carries out the reaction acetyl-CoA + 2-oxoglutarate + H2O = (2R)-homocitrate + CoA + H(+). It catalyses the reaction 2-oxoadipate + acetyl-CoA + H2O = (R)-dihomocitrate + CoA + H(+). The enzyme catalyses 2-oxoheptanedioate + acetyl-CoA + H2O = (R)-trihomocitrate + CoA + H(+). It functions in the pathway organic acid metabolism; 2-oxosuberate biosynthesis. Catalyzes the condensation of alpha-ketoglutarate and acetyl-CoA to form (R)-homocitrate. Can also catalyze the condensation of alpha-ketoadipate with acetyl-CoA to form (R)-homo(2)citrate, and the condensation of alpha-ketopimelate with acetyl-CoA to form (R)-homo(3)citrate. These reactions are part of the biosynthesis pathway of coenzyme B and biotin. The polypeptide is Homocitrate synthase AksA (aksA) (Methanopyrus kandleri (strain AV19 / DSM 6324 / JCM 9639 / NBRC 100938)).